The chain runs to 353 residues: uncharacterized protein (353 aa).

Residues cysteine 40, histidine 70, cysteine 100, cysteine 103, cysteine 106, cysteine 114, and cysteine 158 each contribute to the Zn(2+) site.

Belongs to the zinc-containing alcohol dehydrogenase family. Zn(2+) is required as a cofactor.

This is an uncharacterized protein from Escherichia coli (strain K12).